Here is an 855-residue protein sequence, read N- to C-terminus: DNA replication helicase (855 aa).

Position 78–85 (Gly-78–Ser-85) interacts with ATP.

It belongs to the herpesviridae helicase family. Associates with the primase and the primase-associated factor to form the helicase-primase complex.

The protein resides in the host nucleus. Component of the helicase/primase complex. Unwinds the DNA at the replication forks and generates single-stranded DNA for both leading and lagging strand synthesis. The primase synthesizes short RNA primers on the lagging strand that the polymerase elongates using dNTPs. Possesses helicase-like motifs and therefore may act as the helicase subunit of the complex. This is DNA replication helicase from Amazona oratrix (yellow-headed parrot).